A 704-amino-acid chain; its full sequence is MALHPQAGRPHRDGSEAQAEAAAQDLGRLPSPSKVGAAVCRIQGLGHRAARRPRRGIGTTSASRVPRPGALMPATRNRPRFIHCRGQPPRTRVSSKRSKRSRIHPCHTEVPGWTHEKQMGSSVKERLRPELSQLDQDADDLEEEEAARLPVTSPDGLLMEGDKQPSPGQGPFFYIGGTNGASIISNYCESKGWQRTQDSHCEDYKLKWCEIKCRDNYCSFREGQQLLFQLPNNKLLTTKIGLLSALREHARTLSKARMLPSTQTKVLKMEEFFPETYRLDIRDERQAFFALFDETQMWICKPTASNQGKGIFLIRSQEEAAALQAKTQSIEDDPIYRKMPFRAPQARVVQRYVQNPLLLDGKKFDVRSYMLIACAMPYMVFFGHGYARLTLSLYNPHSSDLSGHLTNQFMQKKSPLYTLLKESTVWTMEHLNRYINDKFRKTKGLPRDWVFTTFTKRMQQIMSHCFLAVKSKLECKLGYFDLIGCDFLIDENFKVWLLEMNANPALHTNCEVLKAVIPGVVIETLDLALETCQKSLHSQKMLPLLSQRRFVLLYNGETTDLWPRLASSRPLNRLPNPNPNPNPNANPHPHPHPNPHPHPNPHPNANPHPPRPTCEAASSALSSARAAISERPGARKSMPSRGAPVCTPRKSRLSDSSGSSIAESEPSLCSGSLEGSRDTAREPSLGPPEEEREEEQRSTSHRGS.

Disordered regions lie at residues M1–P32, G46–E125, and D137–G170. A compositionally biased stretch (basic residues) spans V93–P105. Positions T114–E125 are enriched in basic and acidic residues. A TTL domain is found at Q169–K540. ATP is bound by residues K301, Q307–G308, Q350–V353, K363–D365, and T406–N407. Q307 is an a protein binding site. Mg(2+) is bound by residues D486, E499, and N501. Residues L565–S704 form a disordered region. Composition is skewed to pro residues over residues N576–H588 and H596–P612. Composition is skewed to low complexity over residues A616–S629 and S654–S667.

It depends on Mg(2+) as a cofactor. As to expression, highly expressed in testis. Expressed in brain, heart, kidney, liver, lung, muscle and trachea.

The protein resides in the cytoplasm. It localises to the cytoskeleton. Its subcellular location is the cell projection. It is found in the cilium. The protein localises to the cilium axoneme. The catalysed reaction is (glycyl)(n)-glycyl-L-glutamyl-[protein] + glycine + ATP = (glycyl)(n+1)-glycyl-L-glutamyl-[protein] + ADP + phosphate + H(+). In terms of biological role, polyglycylase which modifies both tubulin and non-tubulin proteins, generating polyglycine side chains of variable lengths on the gamma-carboxyl groups of specific glutamate residues of target proteins. Involved in the elongation step rather than the initiation step of the polyglycylation reaction. Polyglycylates alpha-tubulin and beta-tubulin. Polyglycylates non-tubulin proteins such as nucleosome assembly protein NAP1. This is Protein polyglycylase TTLL10 from Mus musculus (Mouse).